We begin with the raw amino-acid sequence, 496 residues long: Glutamyl-tRNA(Gln) amidotransferase subunit A, mitochondrial (496 aa).

Residues lysine 80 and serine 161 each act as charge relay system in the active site. Serine 185 functions as the Acyl-ester intermediate in the catalytic mechanism.

Belongs to the amidase family. GatA subfamily. Subunit of the heterotrimeric GatCAB amidotransferase (AdT) complex, composed of A, B and C subunits.

Its subcellular location is the mitochondrion. The catalysed reaction is L-glutamyl-tRNA(Gln) + L-glutamine + ATP + H2O = L-glutaminyl-tRNA(Gln) + L-glutamate + ADP + phosphate + H(+). Functionally, allows the formation of correctly charged Gln-tRNA(Gln) through the transamidation of misacylated Glu-tRNA(Gln) in the mitochondria. The reaction takes place in the presence of glutamine and ATP through an activated gamma-phospho-Glu-tRNA(Gln). The chain is Glutamyl-tRNA(Gln) amidotransferase subunit A, mitochondrial from Culex quinquefasciatus (Southern house mosquito).